The sequence spans 480 residues: Acyl-coenzyme A synthetase ACSM6, mitochondrial (480 aa).

A mitochondrion-targeting transit peptide spans methionine 1–cysteine 21. Residues threonine 226–lysine 234, glutamate 366–threonine 371, aspartate 453, and arginine 468 each bind ATP.

This sequence belongs to the ATP-dependent AMP-binding enzyme family. Monomer. It depends on Mg(2+) as a cofactor. Mn(2+) is required as a cofactor.

The protein localises to the mitochondrion. It carries out the reaction a medium-chain fatty acid + ATP + CoA = a medium-chain fatty acyl-CoA + AMP + diphosphate. In terms of biological role, catalyzes the activation of fatty acids by CoA to produce an acyl-CoA, the first step in fatty acid metabolism. In Homo sapiens (Human), this protein is Acyl-coenzyme A synthetase ACSM6, mitochondrial (ACSM6).